Here is a 545-residue protein sequence, read N- to C-terminus: T-complex protein 1 subunit alpha (545 aa).

Belongs to the TCP-1 chaperonin family. As to quaternary structure, heterooligomeric complex of about 850 to 900 kDa that forms two stacked rings, 12 to 16 nm in diameter.

Its subcellular location is the cytoplasm. Its function is as follows. Molecular chaperone; assists the folding of proteins upon ATP hydrolysis. Known to play a role, in vitro, in the folding of actin and tubulin. The chain is T-complex protein 1 subunit alpha (TCP-1A) from Schistosoma mansoni (Blood fluke).